Reading from the N-terminus, the 431-residue chain is BEL1-like homeodomain protein 5 (431 aa).

The tract at residues 80–96 (PIYLKAAQELLNEIVNV) is SR/KY domain. Residues 128–199 (GVAALQMKKA…AVKDMISLQI (72 aa)) are BELL domain. Residues 228 to 290 (AWRPQRGLPE…NARVRMWKPL (63 aa)) constitute a DNA-binding region (homeobox). Positions 302-312 (EESRKGSDRYS) are enriched in basic and acidic residues. Residues 302–333 (EESRKGSDRYSTKGSSSKQPYNNTTSNESSNT) are disordered. Over residues 313–322 (TKGSSSKQPY) the composition is skewed to polar residues. A compositionally biased stretch (low complexity) spans 323–333 (NNTTSNESSNT).

This sequence belongs to the TALE/BELL homeobox family. In terms of assembly, may form heterodimeric complexes with TALE/KNOX proteins. Interacts with OFP1.

Its subcellular location is the nucleus. This chain is BEL1-like homeodomain protein 5 (BLH5), found in Arabidopsis thaliana (Mouse-ear cress).